Here is a 225-residue protein sequence, read N- to C-terminus: 2-C-methyl-D-erythritol 4-phosphate cytidylyltransferase (225 aa).

The protein belongs to the IspD/TarI cytidylyltransferase family. IspD subfamily.

The enzyme catalyses 2-C-methyl-D-erythritol 4-phosphate + CTP + H(+) = 4-CDP-2-C-methyl-D-erythritol + diphosphate. Its pathway is isoprenoid biosynthesis; isopentenyl diphosphate biosynthesis via DXP pathway; isopentenyl diphosphate from 1-deoxy-D-xylulose 5-phosphate: step 2/6. Its function is as follows. Catalyzes the formation of 4-diphosphocytidyl-2-C-methyl-D-erythritol from CTP and 2-C-methyl-D-erythritol 4-phosphate (MEP). This chain is 2-C-methyl-D-erythritol 4-phosphate cytidylyltransferase, found in Clostridium perfringens (strain SM101 / Type A).